The sequence spans 119 residues: MARVKRGVQARRRHKKILSLAKGYYNARRKVFRVAKQAVIKAQQYAYIGRKQKKRNFRSLWIVRINAAARINGLSYSRFMNGLLKCGITLDRKVLADIAVHDPAGFTALAEKAKSILAA.

This sequence belongs to the bacterial ribosomal protein bL20 family.

Binds directly to 23S ribosomal RNA and is necessary for the in vitro assembly process of the 50S ribosomal subunit. It is not involved in the protein synthesizing functions of that subunit. The polypeptide is Large ribosomal subunit protein bL20 (Xylella fastidiosa (strain 9a5c)).